The sequence spans 275 residues: Hydroxyethylthiazole kinase (275 aa).

Met57 contacts substrate. Residues Arg132 and Ser178 each contribute to the ATP site. Position 205 (Gly205) interacts with substrate.

This sequence belongs to the Thz kinase family. Mg(2+) serves as cofactor.

It carries out the reaction 5-(2-hydroxyethyl)-4-methylthiazole + ATP = 4-methyl-5-(2-phosphooxyethyl)-thiazole + ADP + H(+). It functions in the pathway cofactor biosynthesis; thiamine diphosphate biosynthesis; 4-methyl-5-(2-phosphoethyl)-thiazole from 5-(2-hydroxyethyl)-4-methylthiazole: step 1/1. Catalyzes the phosphorylation of the hydroxyl group of 4-methyl-5-beta-hydroxyethylthiazole (THZ). The sequence is that of Hydroxyethylthiazole kinase from Clavibacter sepedonicus (Clavibacter michiganensis subsp. sepedonicus).